Here is a 429-residue protein sequence, read N- to C-terminus: Glucose-6-phosphate isomerase (429 aa).

Glu282 acts as the Proton donor in catalysis. Catalysis depends on residues His303 and Lys418.

The protein belongs to the GPI family.

The protein localises to the cytoplasm. The catalysed reaction is alpha-D-glucose 6-phosphate = beta-D-fructose 6-phosphate. Its pathway is carbohydrate biosynthesis; gluconeogenesis. It functions in the pathway carbohydrate degradation; glycolysis; D-glyceraldehyde 3-phosphate and glycerone phosphate from D-glucose: step 2/4. Functionally, catalyzes the reversible isomerization of glucose-6-phosphate to fructose-6-phosphate. This Mesomycoplasma hyopneumoniae (strain 232) (Mycoplasma hyopneumoniae) protein is Glucose-6-phosphate isomerase.